The primary structure comprises 312 residues: Porphobilinogen deaminase (312 aa).

S-(dipyrrolylmethanemethyl)cysteine is present on C243.

It belongs to the HMBS family. In terms of assembly, monomer. The cofactor is dipyrromethane.

It carries out the reaction 4 porphobilinogen + H2O = hydroxymethylbilane + 4 NH4(+). The protein operates within porphyrin-containing compound metabolism; protoporphyrin-IX biosynthesis; coproporphyrinogen-III from 5-aminolevulinate: step 2/4. Functionally, tetrapolymerization of the monopyrrole PBG into the hydroxymethylbilane pre-uroporphyrinogen in several discrete steps. The protein is Porphobilinogen deaminase of Vibrio campbellii (strain ATCC BAA-1116).